The chain runs to 1172 residues: Carbamoyl phosphate synthase arginine-specific large chain, chloroplastic (1172 aa).

The span at 1-10 (MATSLSSAPT) shows a compositional bias: polar residues. The disordered stretch occupies residues 1–37 (MATSLSSAPTQLRPSPSPSHHRLLHRSSLLPFPRRHH). The N-terminal 50 residues, 1-50 (MATSLSSAPTQLRPSPSPSHHRLLHRSSLLPFPRRHHHRRRRCGALSIAR), are a transit peptide targeting the chloroplast. The segment at 72 to 473 (GRLAGVRKIM…SFQKAVRSLE (402 aa)) is carboxyphosphate synthetic domain. Arg-199, Arg-240, Gly-246, Gly-247, Lys-279, Leu-281, Glu-286, Gly-312, Val-313, His-314, Gln-356, and Glu-370 together coordinate ATP. In terms of domain architecture, ATP-grasp 1 spans 203 to 399 (KQAMDRIGLK…IAKMAAKLSV (197 aa)). Mg(2+) is bound by residues Gln-356, Glu-370, and Asn-372. Residues 474–623 (TGFAGWGCAP…YSSYEYECES (150 aa)) are oligomerization domain. A carbamoyl phosphate synthetic domain region spans residues 624 to 1019 (VPTNKKKVLI…GAFAKAQIAA (396 aa)). Residues 761 to 954 (NAILEELGIE…LAKYASLVMS (194 aa)) enclose the ATP-grasp 2 domain. Arg-797, Lys-836, Leu-838, Glu-843, Gly-869, Ile-870, His-871, Ser-872, Gln-912, and Glu-925 together coordinate ATP. Positions 912, 925, and 927 each coordinate Mg(2+). Residues 1020 to 1172 (GQKLPLNGTV…QNLQAAQSAS (153 aa)) form an allosteric domain region. Positions 1021 to 1162 (QKLPLNGTVF…QDYFQTTDAS (142 aa)) constitute an MGS-like domain.

The protein belongs to the CarB family. Heterodimer composed of 2 chains; the small (or glutamine) chain promotes the hydrolysis of glutamine to ammonia, which is used by the large (or ammonia) chain to synthesize carbamoyl phosphate. Requires Mg(2+) as cofactor. Mn(2+) is required as a cofactor.

The protein localises to the plastid. It localises to the chloroplast. It catalyses the reaction hydrogencarbonate + L-glutamine + 2 ATP + H2O = carbamoyl phosphate + L-glutamate + 2 ADP + phosphate + 2 H(+). The catalysed reaction is hydrogencarbonate + NH4(+) + 2 ATP = carbamoyl phosphate + 2 ADP + phosphate + 2 H(+). It functions in the pathway amino-acid biosynthesis; L-arginine biosynthesis; carbamoyl phosphate from bicarbonate: step 1/1. Large subunit of the arginine-specific carbamoyl phosphate synthase (CPSase). CPSase catalyzes the formation of carbamoyl phosphate from the ammonia moiety of glutamine, hydrogencarbonate, and phosphate donated by ATP, constituting the first step of 2 biosynthetic pathways, one leading to arginine and/or urea and the other to pyrimidine nucleotides. The large subunit (synthetase) binds the substrates ammonia (free or transferred from glutamine from the small subunit), hydrogencarbonate and ATP and carries out an ATP-coupled ligase reaction, activating hydrogencarbonate by forming carboxy phosphate which reacts with ammonia to form carbamoyl phosphate. This Oryza sativa subsp. japonica (Rice) protein is Carbamoyl phosphate synthase arginine-specific large chain, chloroplastic (CARB).